We begin with the raw amino-acid sequence, 721 residues long: 1,4-alpha-glucan branching enzyme GlgB (721 aa).

Catalysis depends on D400, which acts as the Nucleophile. The Proton donor role is filled by E453.

Belongs to the glycosyl hydrolase 13 family. GlgB subfamily. Monomer.

It carries out the reaction Transfers a segment of a (1-&gt;4)-alpha-D-glucan chain to a primary hydroxy group in a similar glucan chain.. Its pathway is glycan biosynthesis; glycogen biosynthesis. In terms of biological role, catalyzes the formation of the alpha-1,6-glucosidic linkages in glycogen by scission of a 1,4-alpha-linked oligosaccharide from growing alpha-1,4-glucan chains and the subsequent attachment of the oligosaccharide to the alpha-1,6 position. In Chlamydia abortus (strain DSM 27085 / S26/3) (Chlamydophila abortus), this protein is 1,4-alpha-glucan branching enzyme GlgB.